The following is a 59-amino-acid chain: Putative potassium channel toxin Ts23 (59 aa).

The signal sequence occupies residues 1 to 22 (MKAFYGILIIFILISMLDLSQQ). 3 disulfides stabilise this stretch: Cys29–Cys50, Cys35–Cys55, and Cys39–Cys57.

This sequence belongs to the short scorpion toxin superfamily. Potassium channel inhibitor family. Alpha-KTx 04 subfamily. Expressed by the venom gland.

It localises to the secreted. Its function is as follows. Potently blocks Kv1.1/KCNA1 (85%), Kv1.2/KCNA2 (91%), Kv1.3/KCNA3 (89%), Kv1.6/KCNA6 (94%), and Shaker (97%). This Tityus serrulatus (Brazilian scorpion) protein is Putative potassium channel toxin Ts23.